Consider the following 424-residue polypeptide: Probable threonylcarbamoyladenosine tRNA methylthiotransferase (424 aa).

In terms of domain architecture, MTTase N-terminal spans 1 to 106 (MRVAIETYGC…VVDAVYSALN (106 aa)). [4Fe-4S] cluster-binding residues include Cys-10, Cys-44, Cys-73, Cys-143, Cys-147, and Cys-150. In terms of domain architecture, Radical SAM core spans 129–359 (LRENAIAIVS…TDLMRKIGLE (231 aa)). One can recognise a TRAM domain in the interval 362–420 (KRFVGKKLRVLVTKEGKNGRNLARMNSYRAVVTEGAVGEFVEVKIKDCRFNYLIGQLAA).

This sequence belongs to the methylthiotransferase family. CDKAL1 subfamily. The cofactor is [4Fe-4S] cluster.

It carries out the reaction N(6)-L-threonylcarbamoyladenosine(37) in tRNA + (sulfur carrier)-SH + AH2 + 2 S-adenosyl-L-methionine = 2-methylsulfanyl-N(6)-L-threonylcarbamoyladenosine(37) in tRNA + (sulfur carrier)-H + 5'-deoxyadenosine + L-methionine + A + S-adenosyl-L-homocysteine + 2 H(+). In terms of biological role, catalyzes the methylthiolation of N6-threonylcarbamoyladenosine (t(6)A), leading to the formation of 2-methylthio-N6-threonylcarbamoyladenosine (ms(2)t(6)A) at position 37 in tRNAs that read codons beginning with adenine. The sequence is that of Probable threonylcarbamoyladenosine tRNA methylthiotransferase from Archaeoglobus fulgidus (strain ATCC 49558 / DSM 4304 / JCM 9628 / NBRC 100126 / VC-16).